Reading from the N-terminus, the 225-residue chain is UPF0758 protein BPP1850 (225 aa).

Positions Ala-103–Leu-225 constitute an MPN domain. Zn(2+) is bound by residues His-174, His-176, and Asp-187. The JAMM motif signature appears at His-174–Asp-187.

This sequence belongs to the UPF0758 family.

This is UPF0758 protein BPP1850 from Bordetella parapertussis (strain 12822 / ATCC BAA-587 / NCTC 13253).